We begin with the raw amino-acid sequence, 774 residues long: Ion-translocating oxidoreductase complex subunit C (774 aa).

4Fe-4S ferredoxin-type domains are found at residues 359 to 389 (ELPEPVPAMPCIRCGDCAQVCPVSLLPQQLH) and 399 to 428 (QLLAHNLFDCIECGACAYVCPSSIPLVQYY). The [4Fe-4S] cluster site is built by C369, C372, C375, C379, C408, C411, C414, and C418. Positions 453 to 490 (EQRQARLRRDEERRAAERAQRAEKAALARAAQAEREEA) are enriched in basic and acidic residues. Residues 453-493 (EQRQARLRRDEERRAAERAQRAEKAALARAAQAEREEAAPA) are disordered.

This sequence belongs to the 4Fe4S bacterial-type ferredoxin family. RnfC subfamily. The complex is composed of six subunits: RnfA, RnfB, RnfC, RnfD, RnfE and RnfG. It depends on [4Fe-4S] cluster as a cofactor.

Its subcellular location is the cell inner membrane. Its function is as follows. Part of a membrane-bound complex that couples electron transfer with translocation of ions across the membrane. The chain is Ion-translocating oxidoreductase complex subunit C from Pseudomonas aeruginosa (strain ATCC 15692 / DSM 22644 / CIP 104116 / JCM 14847 / LMG 12228 / 1C / PRS 101 / PAO1).